A 327-amino-acid chain; its full sequence is tRNA pseudouridine synthase B (327 aa).

D83 functions as the Nucleophile in the catalytic mechanism.

This sequence belongs to the pseudouridine synthase TruB family. Type 1 subfamily.

It carries out the reaction uridine(55) in tRNA = pseudouridine(55) in tRNA. Functionally, responsible for synthesis of pseudouridine from uracil-55 in the psi GC loop of transfer RNAs. In Mesomycoplasma hyopneumoniae (strain 232) (Mycoplasma hyopneumoniae), this protein is tRNA pseudouridine synthase B.